A 353-amino-acid polypeptide reads, in one-letter code: Protein Wnt-11b-2 (353 aa).

An N-terminal signal peptide occupies residues 1 to 22 (MALIRHCVTLLLILCCSRLCGA). N-linked (GlcNAc...) asparagine glycosylation is found at Asn-31, Asn-38, and Asn-88. Cystine bridges form between Cys-78–Cys-89, Cys-128–Cys-136, Cys-138–Cys-155, Cys-208–Cys-222, and Cys-210–Cys-217. Residue Ser-214 is the site of O-palmitoleoyl serine; by PORCN attachment. Sulfotyrosine occurs at positions 274 and 281. Cystine bridges form between Cys-282–Cys-313, Cys-298–Cys-308, Cys-312–Cys-352, Cys-328–Cys-343, Cys-330–Cys-340, and Cys-335–Cys-336. N-linked (GlcNAc...) asparagine glycosylation is present at Asn-299.

This sequence belongs to the Wnt family. Homodimer. Secreted homodimers form a complex with wnt5a homodimers; tyrosine sulfation of both wnt11 and wnt5a by tpst1 is required for this interaction. Interacts with the transmembrane receptor fzd7/fz7. Interacts with lrp6 and ryk. Interacts with tdgf1/frl1. Interacts weakly with frzb1 and strongly with frzb2/crescent. Interaction with frzb2/crescent antagonizes wnt11 function in the neuroectoderm, but enhances it in mesodermal tissue. In terms of processing, glycosylation is required for protein secretion. Palmitoleoylation is required for efficient binding to frizzled receptors. Depalmitoleoylation leads to Wnt signaling pathway inhibition.

It localises to the secreted. The protein localises to the extracellular space. The protein resides in the extracellular matrix. Functionally, ligand for the frizzled7 transmembrane receptor. Primarily acts via non-canonical Wnt pathways mediated by either Ca(2+) and PKC, or by JNK and dvl2/dsh. Depending on the cellular context, can also signal via the canonical Wnt pathway mediated by beta-catenin and dvl2/dsh. May also inhibit canonical Wnt signaling. Maternally initiates dorsal/ventral axis formation by a canonical route, which signals via lrp6. In a complex with wnt5a, activates the canonical and non-canonical processes involved in axis formation. In the non-canonical pathway, acts through fzd7/fz7 to induce phosphorylation of dvl2/dsh. Signals through a non-canonical Wnt pathway to regulate convergent extension movements during gastrulation. Interactions with the secreted Wnt antagonist sfrp5 to coordinate foregut development, acting via a non-canonical wnt pathway whereby sfrp5 restricts wnt11b activity to prevent inappropriate foregut formation. Mediates cardiogenesis via non-canonical Wnt signaling involving JNK-activation and PKC. Acts redundantly with wnt11/wnt11r during pronephros induction. The chain is Protein Wnt-11b-2 from Xenopus tropicalis (Western clawed frog).